The chain runs to 333 residues: Acetyl-coenzyme A carboxylase carboxyl transferase subunit alpha (333 aa).

Residues 48-308 (LLEQKVDALR…KEMLVEELRD (261 aa)) enclose the CoA carboxyltransferase C-terminal domain.

It belongs to the AccA family. In terms of assembly, acetyl-CoA carboxylase is a heterohexamer composed of biotin carboxyl carrier protein (AccB), biotin carboxylase (AccC) and two subunits each of ACCase subunit alpha (AccA) and ACCase subunit beta (AccD).

The protein resides in the cytoplasm. The catalysed reaction is N(6)-carboxybiotinyl-L-lysyl-[protein] + acetyl-CoA = N(6)-biotinyl-L-lysyl-[protein] + malonyl-CoA. Its pathway is lipid metabolism; malonyl-CoA biosynthesis; malonyl-CoA from acetyl-CoA: step 1/1. Component of the acetyl coenzyme A carboxylase (ACC) complex. First, biotin carboxylase catalyzes the carboxylation of biotin on its carrier protein (BCCP) and then the CO(2) group is transferred by the carboxyltransferase to acetyl-CoA to form malonyl-CoA. This Chlorobium limicola (strain DSM 245 / NBRC 103803 / 6330) protein is Acetyl-coenzyme A carboxylase carboxyl transferase subunit alpha.